The sequence spans 660 residues: Acetyl-coenzyme A synthetase (660 aa).

CoA-binding positions include 197-200 (RGGK) and Thr317. ATP is bound by residues 397–399 (GEP), 421–426 (DTFWQT), Asp512, and Arg528. Ser536 provides a ligand contact to CoA. Arg539 provides a ligand contact to ATP. Mg(2+) contacts are provided by Val550 and Val555. N6-acetyllysine is present on Lys625.

This sequence belongs to the ATP-dependent AMP-binding enzyme family. It depends on Mg(2+) as a cofactor. Post-translationally, acetylated. Deacetylation by the SIR2-homolog deacetylase activates the enzyme.

The catalysed reaction is acetate + ATP + CoA = acetyl-CoA + AMP + diphosphate. Functionally, catalyzes the conversion of acetate into acetyl-CoA (AcCoA), an essential intermediate at the junction of anabolic and catabolic pathways. AcsA undergoes a two-step reaction. In the first half reaction, AcsA combines acetate with ATP to form acetyl-adenylate (AcAMP) intermediate. In the second half reaction, it can then transfer the acetyl group from AcAMP to the sulfhydryl group of CoA, forming the product AcCoA. This is Acetyl-coenzyme A synthetase from Cupriavidus taiwanensis (strain DSM 17343 / BCRC 17206 / CCUG 44338 / CIP 107171 / LMG 19424 / R1) (Ralstonia taiwanensis (strain LMG 19424)).